The following is a 1384-amino-acid chain: CHD3-type chromatin-remodeling factor PICKLE (1384 aa).

Serine 23 carries the post-translational modification Phosphoserine. Residues 49–96 (ENACQACGESTNLVSCNTCTYAFHAKCLVPPLKDASVENWRCPECVSP) form a PHD-type zinc finger. Chromo domains follow at residues 98-180 (NEID…NSED) and 190-249 (TTVD…RSKD). In terms of domain architecture, Helicase ATP-binding spans 285 to 471 (RFSWSKQTHV…FMLMHFLDAG (187 aa)). 298–305 (DEMGLGKT) contacts ATP. A Nuclear localization signal motif is present at residues 376 to 383 (KKKKSGQI). A DEAH box motif is present at residues 422-425 (DEGH). In terms of domain architecture, Helicase C-terminal spans 599–760 (LLDKMMVKLK…NINQEELDDI (162 aa)). Acidic residues predominate over residues 893 to 912 (AGLEDVSSDGDESYEAESTD). 4 disordered regions span residues 893–941 (AGLE…TPLM), 1122–1152 (GLQGQNGSGGSNPGAQTNQNPGSVITGNNNA), 1313–1344 (SDQSKSHEDDTKPDLNNVEMKDTAEETKPLRG), and 1365–1384 (VDVKMEEAKEEEKPKNMVVD). Polar residues predominate over residues 1138-1152 (TNQNPGSVITGNNNA). 2 stretches are compositionally biased toward basic and acidic residues: residues 1316 to 1341 (SKSHEDDTKPDLNNVEMKDTAEETKP) and 1367 to 1384 (VKMEEAKEEEKPKNMVVD).

This sequence belongs to the SNF2/RAD54 helicase family. As to quaternary structure, interacts with TAF12B. In terms of tissue distribution, mostly expressed in tissue undergoing significant differentiation (meristems and primordia) such as young seedlings, influorescent tissue and young siliques, but not in endosperm and seed coat (at protein level). Levels decrease as organs age. Also present in trichomes.

The protein resides in the nucleus. Chromatin remodeling factor that represses the expression of embryonic trait genes (such as NFYB9/LEC1) upon and after seed germination and thus enables the developmental switch to post-germinative growth. Silences some MADS-box proteins such as PHE1 and PHE2. Plays a role during carpel differentiation. Regulates late processes in cytokinin signaling. The chain is CHD3-type chromatin-remodeling factor PICKLE (PKL) from Arabidopsis thaliana (Mouse-ear cress).